The chain runs to 204 residues: Redox-sensing transcriptional repressor Rex 2 (204 aa).

Residues 17–53 (MYRKVLEATKKPYISSDEIARFLEINPDLVRKDFSYL) constitute a DNA-binding region (H-T-H motif).

This sequence belongs to the transcriptional regulatory Rex family. As to quaternary structure, homodimer.

Its subcellular location is the cytoplasm. Its function is as follows. Modulates transcription in response to changes in cellular NADH/NAD(+) redox state. This chain is Redox-sensing transcriptional repressor Rex 2 (rex2), found in Thermotoga maritima (strain ATCC 43589 / DSM 3109 / JCM 10099 / NBRC 100826 / MSB8).